A 1343-amino-acid chain; its full sequence is DNA-directed RNA polymerase subunit beta (1343 aa).

This sequence belongs to the RNA polymerase beta chain family. In terms of assembly, the RNAP catalytic core consists of 2 alpha, 1 beta, 1 beta' and 1 omega subunit. When a sigma factor is associated with the core the holoenzyme is formed, which can initiate transcription.

It catalyses the reaction RNA(n) + a ribonucleoside 5'-triphosphate = RNA(n+1) + diphosphate. DNA-dependent RNA polymerase catalyzes the transcription of DNA into RNA using the four ribonucleoside triphosphates as substrates. This is DNA-directed RNA polymerase subunit beta from Haemophilus influenzae (strain PittGG).